A 357-amino-acid polypeptide reads, in one-letter code: MKKMLALLVIAPLLVSCSGNKGNTDNEEFLKDTNAFDILMGQFANNIENIWGINEVLIAGPKDYVKYTDQYQTRSHINFDAGSITIETLSATNSVASLRQAIITTLLMGDDASNTDLYSDANDIQISREPLLYGQVLDNTGQAIRWEGRAASFADYLLQKRLQKRTSGLHVIWSVTIQLVPNHLDKRAHKYLPLVRKASERYGIEESLILAIMQTESSFNPYAVSRSDALGLMQVVQHSAGRDVFKMKGKWGQPSRSYLFDPEQNIDAGTAYLSILKNSYLAGIENPTSKRYAVITAYNGGAGSVLRVFSSDRDRAVGIINNMSPGDVYQTLTTKHPSGESRRYLNKVNSAQKNYRR.

The first 16 residues, methionine 1–serine 16, serve as a signal peptide directing secretion. Cysteine 17 is lipidated: N-palmitoyl cysteine. Cysteine 17 carries the S-diacylglycerol cysteine lipid modification.

It belongs to the transglycosylase Slt family.

The protein resides in the cell outer membrane. The catalysed reaction is Exolytic cleavage of the (1-&gt;4)-beta-glycosidic linkage between N-acetylmuramic acid (MurNAc) and N-acetylglucosamine (GlcNAc) residues in peptidoglycan, from either the reducing or the non-reducing ends of the peptidoglycan chains, with concomitant formation of a 1,6-anhydrobond in the MurNAc residue.. Its function is as follows. Murein-degrading enzyme. May play a role in recycling of muropeptides during cell elongation and/or cell division. This Pectobacterium atrosepticum (strain SCRI 1043 / ATCC BAA-672) (Erwinia carotovora subsp. atroseptica) protein is Membrane-bound lytic murein transglycosylase C.